Here is a 458-residue protein sequence, read N- to C-terminus: UDP-glycosyltransferase 76G1 (458 aa).

The Proton acceptor role is filled by His-25. Residue His-25 participates in rebaudioside A binding. His-25 lines the rubusoside pocket. Asn-27 serves as a coordination point for UDP. The active-site Charge relay is the Asp-124. Rebaudioside A contacts are provided by residues 146–147 (TS) and His-155. UDP contacts are provided by residues Ser-283, 338-339 (WV), and 356-364 (HSGWNSTLE). Residues Trp-359 and 380-381 (DQ) each bind rebaudioside A.

The protein belongs to the UDP-glycosyltransferase family. In terms of assembly, monomer.

The enzyme catalyses steviolbioside + UDP-alpha-D-glucose = rebaudioside B + UDP + H(+). It carries out the reaction stevioside + UDP-alpha-D-glucose = rebaudioside A + UDP + H(+). It catalyses the reaction rebaudioside E + UDP-alpha-D-glucose = rebaudioside D + UDP + H(+). The catalysed reaction is rebaudioside D + UDP-alpha-D-glucose = rebaudioside M + UDP + H(+). Functionally, involved in the biosynthesis of steviol glycosides in leaves. Converts the di-glycoside steviolbioside to the tri-glycoside rebaudioside B. Converts the tri-glycoside stevioside to the tetra-glycoside rebaudioside A. Converts the tetra-glycoside rebaudioside E to the penta-glycoside rebaudioside D. Converts the penta-glycoside rebaudioside D to the hexa-glycoside rebaudioside M. Can glucosylate rubusoside and rebaudioside A in vitro. The sequence is that of UDP-glycosyltransferase 76G1 from Stevia rebaudiana (Stevia).